A 1005-amino-acid chain; its full sequence is Mediator of RNA polymerase II transcription subunit 24 (1005 aa).

It belongs to the Mediator complex subunit 24 family. As to quaternary structure, component of the Mediator complex.

It is found in the nucleus. In terms of biological role, component of the Mediator complex, a coactivator involved in the regulated transcription of nearly all RNA polymerase II-dependent genes. Mediator functions as a bridge to convey information from gene-specific regulatory proteins to the basal RNA polymerase II transcription machinery. Mediator is recruited to promoters by direct interactions with regulatory proteins and serves as a scaffold for the assembly of a functional preinitiation complex with RNA polymerase II and the general transcription factors. This is Mediator of RNA polymerase II transcription subunit 24 (MED24) from Aedes aegypti (Yellowfever mosquito).